An 806-amino-acid chain; its full sequence is Protein translocase subunit SecA 2 (806 aa).

ATP is bound by residues glutamine 122, 140–144 (GEGKT), and aspartate 533.

The protein belongs to the SecA family. In terms of assembly, monomer and homodimer. Part of the essential Sec protein translocation apparatus which comprises SecA, SecYEG and auxiliary proteins SecDF. Other proteins may also be involved.

The protein localises to the cell membrane. Its subcellular location is the cytoplasm. The catalysed reaction is ATP + H2O + cellular proteinSide 1 = ADP + phosphate + cellular proteinSide 2.. In terms of biological role, part of the Sec protein translocase complex. Interacts with the SecYEG preprotein conducting channel. Has a central role in coupling the hydrolysis of ATP to the transfer of proteins into and across the cell membrane, serving as an ATP-driven molecular motor driving the stepwise translocation of polypeptide chains across the membrane. The chain is Protein translocase subunit SecA 2 from Mycobacterium ulcerans (strain Agy99).